We begin with the raw amino-acid sequence, 262 residues long: Shikimate dehydrogenase (NADP(+)) (262 aa).

Shikimate-binding positions include 15 to 17 (SRS) and Thr62. Residue Lys66 is the Proton acceptor of the active site. Glu78 contacts NADP(+). Shikimate-binding residues include Asn87 and Asp102. Residues 126–130 (GAGGA), 150–155 (NRTLAR), and Met214 contribute to the NADP(+) site. A shikimate-binding site is contributed by Tyr216. Gly236 serves as a coordination point for NADP(+).

Belongs to the shikimate dehydrogenase family. As to quaternary structure, homodimer.

The enzyme catalyses shikimate + NADP(+) = 3-dehydroshikimate + NADPH + H(+). The protein operates within metabolic intermediate biosynthesis; chorismate biosynthesis; chorismate from D-erythrose 4-phosphate and phosphoenolpyruvate: step 4/7. Involved in the biosynthesis of the chorismate, which leads to the biosynthesis of aromatic amino acids. Catalyzes the reversible NADPH linked reduction of 3-dehydroshikimate (DHSA) to yield shikimate (SA). In Acinetobacter baumannii (strain AB0057), this protein is Shikimate dehydrogenase (NADP(+)).